The chain runs to 403 residues: 4-hydroxy-3-methylbut-2-enyl diphosphate reductase (403 aa).

A [4Fe-4S] cluster-binding site is contributed by cysteine 66. Position 96 (histidine 96) interacts with (2E)-4-hydroxy-3-methylbut-2-enyl diphosphate. Histidine 96 lines the dimethylallyl diphosphate pocket. Histidine 96 is a binding site for isopentenyl diphosphate. Cysteine 157 is a binding site for [4Fe-4S] cluster. A (2E)-4-hydroxy-3-methylbut-2-enyl diphosphate-binding site is contributed by histidine 185. Position 185 (histidine 185) interacts with dimethylallyl diphosphate. Histidine 185 is an isopentenyl diphosphate binding site. The active-site Proton donor is the glutamate 187. Threonine 250 contributes to the (2E)-4-hydroxy-3-methylbut-2-enyl diphosphate binding site. [4Fe-4S] cluster is bound at residue cysteine 288. 4 residues coordinate (2E)-4-hydroxy-3-methylbut-2-enyl diphosphate: serine 317, serine 318, asparagine 319, and serine 379. Residues serine 317, serine 318, asparagine 319, and serine 379 each coordinate dimethylallyl diphosphate. Positions 317, 318, 319, and 379 each coordinate isopentenyl diphosphate.

It belongs to the IspH family. The cofactor is [4Fe-4S] cluster.

It catalyses the reaction isopentenyl diphosphate + 2 oxidized [2Fe-2S]-[ferredoxin] + H2O = (2E)-4-hydroxy-3-methylbut-2-enyl diphosphate + 2 reduced [2Fe-2S]-[ferredoxin] + 2 H(+). The enzyme catalyses dimethylallyl diphosphate + 2 oxidized [2Fe-2S]-[ferredoxin] + H2O = (2E)-4-hydroxy-3-methylbut-2-enyl diphosphate + 2 reduced [2Fe-2S]-[ferredoxin] + 2 H(+). It participates in isoprenoid biosynthesis; dimethylallyl diphosphate biosynthesis; dimethylallyl diphosphate from (2E)-4-hydroxy-3-methylbutenyl diphosphate: step 1/1. It functions in the pathway isoprenoid biosynthesis; isopentenyl diphosphate biosynthesis via DXP pathway; isopentenyl diphosphate from 1-deoxy-D-xylulose 5-phosphate: step 6/6. Catalyzes the conversion of 1-hydroxy-2-methyl-2-(E)-butenyl 4-diphosphate (HMBPP) into a mixture of isopentenyl diphosphate (IPP) and dimethylallyl diphosphate (DMAPP). Acts in the terminal step of the DOXP/MEP pathway for isoprenoid precursor biosynthesis. The protein is 4-hydroxy-3-methylbut-2-enyl diphosphate reductase of Rippkaea orientalis (strain PCC 8801 / RF-1) (Cyanothece sp. (strain PCC 8801)).